The following is a 334-amino-acid chain: DNA-directed RNA polymerase subunit alpha (334 aa).

The segment at 1-231 is alpha N-terminal domain (alpha-NTD); sequence MNMIKIEPYI…KQMSIFGVDL (231 aa). The interval 247–334 is alpha C-terminal domain (alpha-CTD); that stretch reads ELKTLMIKID…NRKLAKLKSN (88 aa).

This sequence belongs to the RNA polymerase alpha chain family. In terms of assembly, homodimer. The RNAP catalytic core consists of 2 alpha, 1 beta/beta' and 1 omega subunit. When a sigma factor is associated with the core the holoenzyme is formed, which can initiate transcription.

It catalyses the reaction RNA(n) + a ribonucleoside 5'-triphosphate = RNA(n+1) + diphosphate. Its function is as follows. DNA-dependent RNA polymerase catalyzes the transcription of DNA into RNA using the four ribonucleoside triphosphates as substrates. The sequence is that of DNA-directed RNA polymerase subunit alpha from Helicobacter hepaticus (strain ATCC 51449 / 3B1).